Consider the following 244-residue polypeptide: Small ribosomal subunit protein eS4 (244 aa).

The S4 RNA-binding domain maps to 43–108 (LPLLLIVRDI…NYRVLFDRKG (66 aa)).

The protein belongs to the eukaryotic ribosomal protein eS4 family.

This is Small ribosomal subunit protein eS4 (rps4e) from Methanocaldococcus jannaschii (strain ATCC 43067 / DSM 2661 / JAL-1 / JCM 10045 / NBRC 100440) (Methanococcus jannaschii).